A 1167-amino-acid polypeptide reads, in one-letter code: ATP-dependent helicase/deoxyribonuclease subunit B (1167 aa).

In terms of domain architecture, UvrD-like helicase ATP-binding spans 1 to 359; that stretch reads MSLRFLLGRS…IRQTEAYRDL (359 aa). Position 8-15 (8-15) interacts with ATP; that stretch reads GRSGSGKT. The 307-residue stretch at 282 to 588 folds into the UvrD-like helicase C-terminal domain; it reads ANRRHEDRAL…EFSLVPPAMD (307 aa). 4 residues coordinate [4Fe-4S] cluster: cysteine 804, cysteine 1126, cysteine 1129, and cysteine 1135.

It belongs to the helicase family. AddB/RexB type 1 subfamily. In terms of assembly, heterodimer of AddA and AddB. Mg(2+) is required as a cofactor. Requires [4Fe-4S] cluster as cofactor.

Its function is as follows. The heterodimer acts as both an ATP-dependent DNA helicase and an ATP-dependent, dual-direction single-stranded exonuclease. Recognizes the chi site generating a DNA molecule suitable for the initiation of homologous recombination. The AddB subunit has 5' -&gt; 3' nuclease activity but not helicase activity. The polypeptide is ATP-dependent helicase/deoxyribonuclease subunit B (Geobacillus kaustophilus (strain HTA426)).